The sequence spans 132 residues: Small ribosomal subunit protein uS8 (132 aa).

Belongs to the universal ribosomal protein uS8 family. Part of the 30S ribosomal subunit. Contacts proteins S5 and S12.

One of the primary rRNA binding proteins, it binds directly to 16S rRNA central domain where it helps coordinate assembly of the platform of the 30S subunit. This Rickettsia felis (strain ATCC VR-1525 / URRWXCal2) (Rickettsia azadi) protein is Small ribosomal subunit protein uS8.